A 372-amino-acid polypeptide reads, in one-letter code: Queuine tRNA-ribosyltransferase (372 aa).

Residue D89 is the Proton acceptor of the active site. Residues 89–93 (DSGGF), D161, and G232 contribute to the substrate site. The interval 262–268 (GIGDLPS) is RNA binding. The Nucleophile role is filled by D281. Positions 286 to 290 (TKAAR) are RNA binding; important for wobble base 34 recognition. Positions 319, 321, 324, and 351 each coordinate Zn(2+).

This sequence belongs to the queuine tRNA-ribosyltransferase family. Homodimer. Within each dimer, one monomer is responsible for RNA recognition and catalysis, while the other monomer binds to the replacement base PreQ1. Zn(2+) is required as a cofactor.

The catalysed reaction is 7-aminomethyl-7-carbaguanine + guanosine(34) in tRNA = 7-aminomethyl-7-carbaguanosine(34) in tRNA + guanine. The protein operates within tRNA modification; tRNA-queuosine biosynthesis. Its function is as follows. Catalyzes the base-exchange of a guanine (G) residue with the queuine precursor 7-aminomethyl-7-deazaguanine (PreQ1) at position 34 (anticodon wobble position) in tRNAs with GU(N) anticodons (tRNA-Asp, -Asn, -His and -Tyr). Catalysis occurs through a double-displacement mechanism. The nucleophile active site attacks the C1' of nucleotide 34 to detach the guanine base from the RNA, forming a covalent enzyme-RNA intermediate. The proton acceptor active site deprotonates the incoming PreQ1, allowing a nucleophilic attack on the C1' of the ribose to form the product. After dissociation, two additional enzymatic reactions on the tRNA convert PreQ1 to queuine (Q), resulting in the hypermodified nucleoside queuosine (7-(((4,5-cis-dihydroxy-2-cyclopenten-1-yl)amino)methyl)-7-deazaguanosine). The polypeptide is Queuine tRNA-ribosyltransferase (Chlamydia pneumoniae (Chlamydophila pneumoniae)).